Reading from the N-terminus, the 189-residue chain is Putative manganese efflux pump MntP (189 aa).

The next 6 membrane-spanning stretches (helical) occupy residues 3–23, 41–61, 62–82, 104–124, 132–152, and 168–188; these read PVAT…AAIG, LIFG…GKAA, AQYV…VLGA, FWLL…VGAG, IYST…IGVM, and AGGI…LNIF.

This sequence belongs to the MntP (TC 9.B.29) family.

The protein resides in the cell inner membrane. In terms of biological role, probably functions as a manganese efflux pump. The sequence is that of Putative manganese efflux pump MntP from Paraburkholderia phytofirmans (strain DSM 17436 / LMG 22146 / PsJN) (Burkholderia phytofirmans).